Consider the following 82-residue polypeptide: Omega-conotoxin-like Am6.2 (82 aa).

Positions 1–22 (MKLTCMMIVAVLFLTAWTFVTA) are cleaved as a signal peptide. Residues 23-52 (VPHSSNVLENLYLKARHEMENQEASKLNMR) constitute a propeptide that is removed on maturation. 3 disulfide bridges follow: Cys-56–Cys-73, Cys-63–Cys-77, and Cys-72–Cys-81. The residue at position 76 (Trp-76) is a 6'-bromotryptophan; partial; in Am6.2b (major form).

The protein belongs to the conotoxin O1 family. Post-translationally, mostly non-hydroxylated. Two forms of this peptides have been described. Am6.2a (Am3136) is not unmodified, while Am6.2b (Am3214) is Trp-76 brominated. Both forms are found in venom with a much more abundant brominated form. As to expression, expressed by the venom duct.

The protein localises to the secreted. In terms of biological role, omega-conotoxins act at presynaptic membranes, they bind and block voltage-gated calcium channels (Cav). The polypeptide is Omega-conotoxin-like Am6.2 (Conus amadis (Amadis cone)).